Reading from the N-terminus, the 607-residue chain is Elongation factor 4 (607 aa).

The tr-type G domain occupies E11–Q193. GTP-binding positions include D23–T28 and N140–D143.

Belongs to the TRAFAC class translation factor GTPase superfamily. Classic translation factor GTPase family. LepA subfamily.

It is found in the cell membrane. It carries out the reaction GTP + H2O = GDP + phosphate + H(+). Its function is as follows. Required for accurate and efficient protein synthesis under certain stress conditions. May act as a fidelity factor of the translation reaction, by catalyzing a one-codon backward translocation of tRNAs on improperly translocated ribosomes. Back-translocation proceeds from a post-translocation (POST) complex to a pre-translocation (PRE) complex, thus giving elongation factor G a second chance to translocate the tRNAs correctly. Binds to ribosomes in a GTP-dependent manner. In Lactococcus lactis subsp. lactis (strain IL1403) (Streptococcus lactis), this protein is Elongation factor 4.